Consider the following 156-residue polypeptide: RNA polymerase sigma factor SigS (156 aa).

Residues 29 to 44 (EYYQLLLIKMWQLSQI) carry the Polymerase core binding motif. A DNA-binding region (H-T-H motif) is located at residues 126–145 (QFEIAEIMSLSLSTIKLIKT).

The protein belongs to the sigma-70 factor family.

Sigma factors are initiation factors that promote the attachment of RNA polymerase to specific initiation sites and are then released. Sigma-S contributes to the protection against external stress, thus playing a role in cellular fitness and survival. The chain is RNA polymerase sigma factor SigS (sigS) from Staphylococcus aureus (strain bovine RF122 / ET3-1).